A 165-amino-acid polypeptide reads, in one-letter code: MAPEENAGSELLLQSFKRRFLAARALRSFRWQSLEAKLRDSSDSELLRDILQKHEAVHTEPLDELYEVLVETLMAKESTQGHRSYLLTCCIAQKPSCRWSGSCGGWLPAGSTSGLLNSTWPLPSATQRCASCSPPSYAGLGSDGKRKLIMTRNCFPTESTWRWQS.

Belongs to the class I-like SAM-binding methyltransferase superfamily. EEF2KMT family. Interacts with EEF2KMT.

This chain is Putative protein FAM86C1P, found in Homo sapiens (Human).